A 148-amino-acid polypeptide reads, in one-letter code: Large ribosomal subunit protein uL15 (148 aa).

Residues 1–30 (MPSRLRKTRKLRGHVSHGHGRIGKHRKHPG) show a composition bias toward basic residues. The tract at residues 1–39 (MPSRLRKTRKLRGHVSHGHGRIGKHRKHPGGRGNAGGLH) is disordered. H39 is subject to (3S)-3-hydroxyhistidine. N6-acetyllysine occurs at positions 47 and 55. S68 bears the Phosphoserine mark. N6-acetyllysine is present on K110.

This sequence belongs to the universal ribosomal protein uL15 family. As to quaternary structure, component of the large ribosomal subunit. Post-translationally, hydroxylated on His-39 by MINA.

It localises to the cytoplasm. Functionally, component of the large ribosomal subunit. The ribosome is a large ribonucleoprotein complex responsible for the synthesis of proteins in the cell. The polypeptide is Large ribosomal subunit protein uL15 (RPL27A) (Macaca fascicularis (Crab-eating macaque)).